A 498-amino-acid chain; its full sequence is Diacylglycerol O-acyltransferase 1 (498 aa).

The disordered stretch occupies residues 1 to 66; sequence MGDRGGAGSS…AHTRDKDGRT (66 aa). Residues 1 to 92 lie on the Cytoplasmic side of the membrane; the sequence is MGDRGGAGSS…SLFSSDSGFS (92 aa). An involved in homomerization region spans residues 1 to 100; that stretch reads MGDRGGAGSS…FSNYRGILNW (100 aa). Position 20 is a phosphoserine (Ser-20). The helical transmembrane segment at 93-127 threads the bilayer; it reads NYRGILNWCVVMLILSNARLFLENLIKYGILVDPI. Over 128 to 139 the chain is Lumenal; sequence QVVSLFLKDPYS. The interval 128–139 is extracellular loop 1 (EL1); the sequence is QVVSLFLKDPYS. A helical membrane pass occupies residues 140-165; it reads WPAPCVIIASNIFVVAAFQIEKRLAV. The tract at residues 140–498 is MBOAT fold; sequence WPAPCVIIAS…VLNYDAPVGV (359 aa). Residues 166–170 lie on the Cytoplasmic side of the membrane; the sequence is GALTE. The helical transmembrane segment at 171–193 threads the bilayer; that stretch reads QMGLLLHVVNLATIICFPAAVAL. The Lumenal portion of the chain corresponds to 194-200; it reads LVESITP. The helical transmembrane segment at 201–232 threads the bilayer; that stretch reads VGSVFALASYSIMFLKLYSYRDVNLWCRQRRV. The Cytoplasmic portion of the chain corresponds to 233 to 284; the sequence is KAKAVSTGKKVSGAAAQQAVSYPDNLTYRDLYYFIFAPTLCYELNFPRSPRI. The intracellular loop 1 (IL1) stretch occupies residues 235–287; it reads KAVSTGKKVSGAAAQQAVSYPDNLTYRDLYYFIFAPTLCYELNFPRSPRIRKR. A helical transmembrane segment spans residues 285–319; the sequence is RKRFLLRRVLEMLFFTQLQVGLIQQWMVPTIQNSM. Residues 320–326 lie on the Lumenal side of the membrane; it reads KPFKDMD. The helical transmembrane segment at 327-364 threads the bilayer; it reads YSRIIERLLKLAVPNHLIWLIFFYWFFHSCLNAVAELL. Topologically, residues 365–410 are cytoplasmic; it reads QFGDREFYRDWWNAESVTYFWQNWNIPVHKWCIRHFYKPMLRHGSS. Residues 365-410 are intracellular loop 2 (IL2); sequence QFGDREFYRDWWNAESVTYFWQNWNIPVHKWCIRHFYKPMLRHGSS. The short motif at 371–377 is the FYXDWWN motif element; it reads FYRDWWN. An acyl-CoA-binding positions include 385-393, Tyr-401, and Arg-415; that span reads WQNWNIPVH. The interval 391-405 is amphipathic helix (AH); it reads PVHKWCIRHFYKPML. Residues 411-431 form a helical membrane-spanning segment; the sequence is KWVARTGVFLTSAFFHEYLVS. His-426 is an active-site residue. Over 432-439 the chain is Lumenal; that stretch reads VPLRMFRL. Residues 440-458 traverse the membrane as a helical segment; sequence WAFTAMMAQVPLAWIVGRF. Topologically, residues 459-460 are cytoplasmic; it reads FQ. A helical membrane pass occupies residues 461-492; that stretch reads GNYGNAAVWVTLIIGQPVAVLMYVHDYYVLNY. An acyl-CoA is bound at residue Tyr-488. Residues 493 to 498 lie on the Lumenal side of the membrane; it reads DAPVGV.

The protein belongs to the membrane-bound acyltransferase family. Sterol o-acyltransferase subfamily. Homodimer or homotetramer; both forms have similar enzymatic activities.

It is found in the endoplasmic reticulum membrane. The catalysed reaction is an acyl-CoA + a 1,2-diacyl-sn-glycerol = a triacyl-sn-glycerol + CoA. It carries out the reaction all-trans-retinol + an acyl-CoA = an all-trans-retinyl ester + CoA. It catalyses the reaction 1-octadecanoyl-2-(5Z,8Z,11Z,14Z-eicosatetraenoyl)-sn-glycerol + (9Z)-octadecenoyl-CoA = 1-octadecanoyl-2-(5Z,8Z,11Z,14Z)-eicosatetraenoyl-3-(9Z)-octadecenoyl-sn-glycerol + CoA. The enzyme catalyses hexadecane-1,2-diol + 2 hexadecanoyl-CoA = 1,2-O,O-dihexadecanoyl-1,2-hexadecanediol + 2 CoA. The catalysed reaction is hexadecane-1,2-diol + hexadecanoyl-CoA = 2-hydroxyhexadecyl hexadecanoate + CoA. It carries out the reaction 2-(9Z-octadecenoyl)-glycerol + hexadecanoyl-CoA = 1-hexadecanoyl-2-(9Z-octadecenoyl)-sn-glycerol + CoA. It catalyses the reaction 1,2-di-(9Z-octadecenoyl)-sn-glycerol + hexadecanoyl-CoA = 1,2-di-(9Z)-octadecenoyl-3-hexadecanoyl-sn-glycerol + CoA. The enzyme catalyses hexadecan-1-ol + hexadecanoyl-CoA = hexadecanyl hexadecanoate + CoA. The catalysed reaction is all-trans-retinol + hexadecanoyl-CoA = all-trans-retinyl hexadecanoate + CoA. It carries out the reaction 13-cis-retinol + hexadecanoyl-CoA = 13-cis-retinyl hexadecanoate + CoA. It catalyses the reaction 1,2-di-(9Z-octadecenoyl)-sn-glycerol + (9Z)-octadecenoyl-CoA = 1,2,3-tri-(9Z-octadecenoyl)-glycerol + CoA. The enzyme catalyses 1,3-di-(9Z-octadecenoyl)-glycerol + (9Z)-octadecenoyl-CoA = 1,2,3-tri-(9Z-octadecenoyl)-glycerol + CoA. The catalysed reaction is 2,3-di-(9Z)-octadecenoyl-sn-glycerol + (9Z)-octadecenoyl-CoA = 1,2,3-tri-(9Z-octadecenoyl)-glycerol + CoA. It carries out the reaction 1-O-(9Z-octadecenyl)-glycerol + (9Z)-octadecenoyl-CoA = 1-O-(9Z-octadecyl)-3-(9Z-octadecenoyl)-glycerol + CoA. It catalyses the reaction 1-(9Z-octadecenoyl)-glycerol + (9Z)-octadecenoyl-CoA = 1,2-di-(9Z-octadecenoyl)-glycerol + CoA. The enzyme catalyses 2-(9Z-octadecenoyl)-glycerol + (9Z)-octadecenoyl-CoA = 1,2-di-(9Z-octadecenoyl)-sn-glycerol + CoA. The catalysed reaction is 1-O-(9Z-octadecyl)-3-(9Z-octadecenoyl)-glycerol + (9Z)-octadecenoyl-CoA = 1-O-(9Z-octadecenyl)-2,3-di-(9Z-octadecenoyl)glycerol + CoA. It carries out the reaction 1,2-di-(9Z-octadecenoyl)-glycerol + (9Z)-octadecenoate + H(+) = 1,2,3-tri-(9Z-octadecenoyl)-glycerol + H2O. Its pathway is lipid metabolism; glycerolipid metabolism. Its function is as follows. Catalyzes the terminal and only committed step in triacylglycerol synthesis by using diacylglycerol and fatty acyl CoA as substrates. Highly expressed in epithelial cells of the small intestine and its activity is essential for the absorption of dietary fats. In liver, plays a role in esterifying exogenous fatty acids to glycerol, and is required to synthesize fat for storage. Also present in female mammary glands, where it produces fat in the milk. May be involved in VLDL (very low density lipoprotein) assembly. In contrast to DGAT2 it is not essential for survival. Functions as the major acyl-CoA retinol acyltransferase (ARAT) in the skin, where it acts to maintain retinoid homeostasis and prevent retinoid toxicity leading to skin and hair disorders. Exhibits additional acyltransferase activities, includin acyl CoA:monoacylglycerol acyltransferase (MGAT), wax monoester and wax diester synthases. Also able to use 1-monoalkylglycerol (1-MAkG) as an acyl acceptor for the synthesis of monoalkyl-monoacylglycerol (MAMAG). The polypeptide is Diacylglycerol O-acyltransferase 1 (Mus musculus (Mouse)).